Here is a 147-residue protein sequence, read N- to C-terminus: Large ribosomal subunit protein uL15 (147 aa).

The disordered stretch occupies residues 1–62; sequence MKLHELKPAQ…GQQPLSRRMP (62 aa). Composition is skewed to gly residues over residues 21–31 and 42–52; these read RGIGSGTGKTS and AGGGVRPGFEG.

It belongs to the universal ribosomal protein uL15 family. Part of the 50S ribosomal subunit.

Functionally, binds to the 23S rRNA. This Desulfitobacterium hafniense (strain DSM 10664 / DCB-2) protein is Large ribosomal subunit protein uL15.